A 692-amino-acid polypeptide reads, in one-letter code: Vitamin B12-dependent ribonucleoside-diphosphate reductase (692 aa).

The region spanning 7 to 95 is the ATP-cone domain; sequence AKVRRRDGTL…IYRQRRAELR (89 aa). Substrate contacts are provided by residues serine 177, 192-193, glycine 221, 375-379, and 520-524; these read GC, NPCGE, and PTGTI. Cysteines 193 and 388 form a disulfide. The active-site Proton acceptor is the asparagine 375. The active-site Cysteine radical intermediate is the cysteine 377. The active-site Proton acceptor is the glutamate 379.

It belongs to the ribonucleoside diphosphate reductase class-2 family. Adenosylcob(III)alamin serves as cofactor.

The enzyme catalyses a 2'-deoxyribonucleoside 5'-diphosphate + [thioredoxin]-disulfide + H2O = a ribonucleoside 5'-diphosphate + [thioredoxin]-dithiol. In terms of biological role, provides the precursors necessary for DNA synthesis. Catalyzes the biosynthesis of deoxyribonucleotides from the corresponding ribonucleotides. The sequence is that of Vitamin B12-dependent ribonucleoside-diphosphate reductase (nrdZ) from Mycobacterium tuberculosis (strain CDC 1551 / Oshkosh).